We begin with the raw amino-acid sequence, 805 residues long: Leucine--tRNA ligase (805 aa).

Positions 40 to 51 (PYPSGQGLHVGH) match the 'HIGH' region motif. The short motif at 577–581 (KMSKS) is the 'KMSKS' region element. Residue lysine 580 coordinates ATP.

It belongs to the class-I aminoacyl-tRNA synthetase family.

The protein localises to the cytoplasm. It carries out the reaction tRNA(Leu) + L-leucine + ATP = L-leucyl-tRNA(Leu) + AMP + diphosphate. This is Leucine--tRNA ligase from Limosilactobacillus fermentum (strain NBRC 3956 / LMG 18251) (Lactobacillus fermentum).